Reading from the N-terminus, the 572-residue chain is Phosphoenolpyruvate-protein phosphotransferase (572 aa).

H191 acts as the Tele-phosphohistidine intermediate in catalysis. 2 residues coordinate phosphoenolpyruvate: R298 and R334. Mg(2+)-binding residues include E433 and D457. Residues 456 to 457 (ND) and R467 each bind phosphoenolpyruvate. Catalysis depends on C504, which acts as the Proton donor.

The protein belongs to the PEP-utilizing enzyme family. As to quaternary structure, homodimer. Mg(2+) serves as cofactor.

It is found in the cytoplasm. The catalysed reaction is L-histidyl-[protein] + phosphoenolpyruvate = N(pros)-phospho-L-histidyl-[protein] + pyruvate. General (non sugar-specific) component of the phosphoenolpyruvate-dependent sugar phosphotransferase system (sugar PTS). This major carbohydrate active-transport system catalyzes the phosphorylation of incoming sugar substrates concomitantly with their translocation across the cell membrane. Enzyme I transfers the phosphoryl group from phosphoenolpyruvate (PEP) to the phosphoryl carrier protein (HPr). The polypeptide is Phosphoenolpyruvate-protein phosphotransferase (ptsI) (Staphylococcus epidermidis (strain ATCC 35984 / DSM 28319 / BCRC 17069 / CCUG 31568 / BM 3577 / RP62A)).